A 49-amino-acid chain; its full sequence is Large ribosomal subunit protein bL33A (49 aa).

This sequence belongs to the bacterial ribosomal protein bL33 family.

This is Large ribosomal subunit protein bL33A from Staphylococcus haemolyticus (strain JCSC1435).